The sequence spans 394 residues: Elongation factor Tu (394 aa).

Residues 10–205 form the tr-type G domain; it reads KPHMNVGTIG…SMDNYFDLPE (196 aa). The tract at residues 19–26 is G1; sequence GHVDHGKT. 19 to 26 contacts GTP; the sequence is GHVDHGKT. A Mg(2+)-binding site is contributed by Thr26. The segment at 61–65 is G2; sequence GITIN. The G3 stretch occupies residues 82-85; sequence DCPG. GTP-binding positions include 82 to 86 and 137 to 140; these read DCPGH and NKLD. The segment at 137–140 is G4; the sequence is NKLD. Positions 173–175 are G5; it reads SAF.

This sequence belongs to the TRAFAC class translation factor GTPase superfamily. Classic translation factor GTPase family. EF-Tu/EF-1A subfamily. As to quaternary structure, monomer.

Its subcellular location is the cytoplasm. The catalysed reaction is GTP + H2O = GDP + phosphate + H(+). In terms of biological role, GTP hydrolase that promotes the GTP-dependent binding of aminoacyl-tRNA to the A-site of ribosomes during protein biosynthesis. This Borreliella burgdorferi (strain ATCC 35210 / DSM 4680 / CIP 102532 / B31) (Borrelia burgdorferi) protein is Elongation factor Tu.